The chain runs to 620 residues: Methionine--tRNA ligase (620 aa).

The short motif at 11–21 is the 'HIGH' region element; the sequence is PYANGPRHIGH. Zn(2+)-binding residues include Cys143, Cys146, Cys156, and Cys159. Positions 347-351 match the 'KMSKS' region motif; it reads KFSSS. Ser350 provides a ligand contact to ATP.

The protein belongs to the class-I aminoacyl-tRNA synthetase family. MetG type 1 subfamily. In terms of assembly, monomer. Zn(2+) serves as cofactor.

It localises to the cytoplasm. The enzyme catalyses tRNA(Met) + L-methionine + ATP = L-methionyl-tRNA(Met) + AMP + diphosphate. Is required not only for elongation of protein synthesis but also for the initiation of all mRNA translation through initiator tRNA(fMet) aminoacylation. This is Methionine--tRNA ligase from Bifidobacterium adolescentis (strain ATCC 15703 / DSM 20083 / NCTC 11814 / E194a).